Here is an 887-residue protein sequence, read N- to C-terminus: MERRQFNTSNIRNGTGRPRKTPRSKLYMVYPPLSGEDSTNPEPEEGSSQENNPTEPSSSQSNSVQNQDQSEDQSQLPQQESNTQQESNTQQESNTPSPRASNTSTETPAPLSPIQPGIRNIPSGLLLPQEKVGRLMGYPFYRDFNFTLNPERYQKLIYVFQILKNAARNHRNGASLLRKYFSLARRSKRTTDMFVTTIEEMRKRSLENSRKRELEEAQEREESNKRQHTESSAEPNAESSTESTTESNAESGAEPNAEPSAESTTESNVESGAEPNAESGAESGAEPTAESNAELKQRIWEILSYRLEQSNNETNNTGESNSTSQQPRQLPNNELIMNIRVLQKNTHAKPVLGRIKFTPDKSNKTSLTGSQNKVHSTNTQQSQKHPQQILTNSETHKPQQYSAQSQQQMVHQTNSHEPSQKRSPPPQQQQQKQPSVPTSSVPLQVSQKQNQQQQELPLPPQPQPQQRTAPSAVKQQQSMQMQPPPQQQQQQQRHQPLQQSPPTMPLQQQPVPPVQQVQTVPPPSSQPQTQLSQQQQQQQQAQLQMQVPRCYQYQNRPPSQQRQYSQTPQYNQPPPQQKVYALPPQQVYAPPPRQVYAQPTIACKQQYPQQLYEQAPQEGSSYQHHYQQVQQRQNQQPYMQSAPTYQQPHVQTPKSTRSNKQEKQRLPKGQEQVPKATRTMFEAFTGSNIAVEKLRQRTLDNGREPERLRTEYVNVLSSPERAAEKSTSRSKQSSNQKPVVKQQSSFPPPIKHQQTQEQQGNILPPVSQLLAIQSSTVTSRGSNASGAVMGSGNTQRVASRSFTNTFVAEAVVNNANNRGGPVPPTGPETNTRGGRASTRSSGRPRGNRSTQRAEGNVTGRVARSTDGSQSQNSGKASKISNIRNLLN.

Residues 1–13 (MERRQFNTSNIRN) show a composition bias toward polar residues. Disordered stretches follow at residues 1–117 (MERR…IQPG), 203–293 (KRSL…ESNA), 311–330 (NNETNNTGESNSTSQQPRQL), 350–542 (PVLG…QQAQ), 555–578 (NRPPSQQRQYSQTPQYNQPPPQQK), 614–675 (QAPQ…QVPK), 696–758 (QRTL…TQEQ), and 813–887 (NNAN…NLLN). The segment covering 57–75 (SSSQSNSVQNQDQSEDQSQ) has biased composition (low complexity). Residues 76 to 107 (LPQQESNTQQESNTQQESNTPSPRASNTSTET) show a composition bias toward polar residues. The stretch at 199–234 (EEMRKRSLENSRKRELEEAQEREESNKRQHTESSAE) forms a coiled coil. Basic and acidic residues predominate over residues 203–231 (KRSLENSRKRELEEAQEREESNKRQHTES). Residues 232–254 (SAEPNAESSTESTTESNAESGAE) are compositionally biased toward low complexity. Residues 261-270 (AESTTESNVE) are compositionally biased toward polar residues. Low complexity predominate over residues 311–326 (NNETNNTGESNSTSQQ). Residues 364 to 393 (KTSLTGSQNKVHSTNTQQSQKHPQQILTNS) show a composition bias toward polar residues. Composition is skewed to low complexity over residues 399–408 (QQYSAQSQQQ), 428–456 (QQQQKQPSVPTSSVPLQVSQKQNQQQQEL), 475–519 (QQQS…QVQT), and 526–542 (QPQTQLSQQQQQQQQAQ). The segment covering 622–640 (YQHHYQQVQQRQNQQPYMQ) has biased composition (low complexity). The span at 641 to 658 (SAPTYQQPHVQTPKSTRS) shows a compositional bias: polar residues. A compositionally biased stretch (basic and acidic residues) spans 696 to 710 (QRTLDNGREPERLRT). Over residues 729 to 745 (RSKQSSNQKPVVKQQSS) the composition is skewed to polar residues. Over residues 829–844 (TNTRGGRASTRSSGRP) the composition is skewed to low complexity. The span at 865–887 (TDGSQSQNSGKASKISNIRNLLN) shows a compositional bias: polar residues.

It localises to the nucleus. Its function is as follows. Transcriptional regulator involved in extension of germ tubes into elongated hyphae and maintenance of filamentous growth. Regulates expression of UME6. Acts in a pathway that regulates maintenance of hyphal growth by repressing hyphal-to-yeast transition and allows dissemination within host epithelial tissues. Dispensable for invasion into both host oral epithelial cells and enterocytes, but required for epithelial damage. The chain is Transcriptional regulator DEF1 (DEF1) from Candida albicans (strain SC5314 / ATCC MYA-2876) (Yeast).